The following is a 382-amino-acid chain: Protein RecA (382 aa).

Gly-79–Thr-86 contacts ATP.

It belongs to the RecA family.

It is found in the cytoplasm. Can catalyze the hydrolysis of ATP in the presence of single-stranded DNA, the ATP-dependent uptake of single-stranded DNA by duplex DNA, and the ATP-dependent hybridization of homologous single-stranded DNAs. It interacts with LexA causing its activation and leading to its autocatalytic cleavage. This is Protein RecA from Streptococcus sanguinis (strain SK36).